A 64-amino-acid chain; its full sequence is Large ribosomal subunit protein uL29 (64 aa).

The protein belongs to the universal ribosomal protein uL29 family.

This chain is Large ribosomal subunit protein uL29, found in Porphyromonas gingivalis (strain ATCC 33277 / DSM 20709 / CIP 103683 / JCM 12257 / NCTC 11834 / 2561).